Reading from the N-terminus, the 197-residue chain is Prefoldin subunit 3 (197 aa).

Position 2 is an N-acetylalanine (A2). Residue K59 is modified to N6-acetyllysine.

The protein belongs to the prefoldin subunit alpha family. As to quaternary structure, heterohexamer of two PFD-alpha type and four PFD-beta type subunits. Binds to the C-terminal part of VHL.

Its subcellular location is the cytoplasm. The protein localises to the nucleus. Its function is as follows. Binds specifically to cytosolic chaperonin (c-CPN) and transfers target proteins to it. Binds to nascent polypeptide chain and promotes folding in an environment in which there are many competing pathways for nonnative proteins. This Bos taurus (Bovine) protein is Prefoldin subunit 3 (VBP1).